A 253-amino-acid polypeptide reads, in one-letter code: Transcription factor bHLH106 (253 aa).

One can recognise a bHLH domain in the interval 66–115 (AALRNHKEAERRRRERINSHLNKLRNVLSCNSKTDKATLLAKVVQRVREL).

As to quaternary structure, homodimer.

It localises to the nucleus. This is Transcription factor bHLH106 (BHLH106) from Arabidopsis thaliana (Mouse-ear cress).